Consider the following 122-residue polypeptide: Large ribosomal subunit protein uL14 (122 aa).

This sequence belongs to the universal ribosomal protein uL14 family. As to quaternary structure, part of the 50S ribosomal subunit. Forms a cluster with proteins L3 and L19. In the 70S ribosome, L14 and L19 interact and together make contacts with the 16S rRNA in bridges B5 and B8.

Binds to 23S rRNA. Forms part of two intersubunit bridges in the 70S ribosome. This is Large ribosomal subunit protein uL14 from Gemmatimonas aurantiaca (strain DSM 14586 / JCM 11422 / NBRC 100505 / T-27).